The chain runs to 194 residues: UPF0215 protein TV0037 (194 aa).

Belongs to the UPF0215 family.

The chain is UPF0215 protein TV0037 from Thermoplasma volcanium (strain ATCC 51530 / DSM 4299 / JCM 9571 / NBRC 15438 / GSS1).